A 365-amino-acid polypeptide reads, in one-letter code: DNA replication and repair protein RecF (365 aa).

Residue 30–37 participates in ATP binding; it reads GLNAQGKT.

This sequence belongs to the RecF family.

The protein localises to the cytoplasm. In terms of biological role, the RecF protein is involved in DNA metabolism; it is required for DNA replication and normal SOS inducibility. RecF binds preferentially to single-stranded, linear DNA. It also seems to bind ATP. The polypeptide is DNA replication and repair protein RecF (Chlamydia trachomatis serovar A (strain ATCC VR-571B / DSM 19440 / HAR-13)).